The primary structure comprises 509 residues: Putative ATP-dependent RNA helicase QP509L (509 aa).

The Helicase ATP-binding domain occupies 110–262; the sequence is KKLLSPYGRF…KIILHHLGQP (153 aa). 123–130 is an ATP binding site; it reads LNTGLGKT. The DEAH box motif lies at 215–218; that stretch reads DEAH.

This sequence belongs to the DEAD box helicase family. DEAH subfamily.

The catalysed reaction is ATP + H2O = ADP + phosphate + H(+). This chain is Putative ATP-dependent RNA helicase QP509L, found in Ornithodoros (relapsing fever ticks).